Here is a 602-residue protein sequence, read N- to C-terminus: Probable pectinesterase/pectinesterase inhibitor 64 (602 aa).

A helical transmembrane segment spans residues 36 to 56 (ILIIIAASCILLLLISLLIYA). A disordered region spans residues 62 to 91 (SRNHHNPSHQTPTSDDHPPPETPPSPPPIA). Positions 81-90 (PETPPSPPPI) are enriched in pro residues. Positions 87–237 (PPPIAQIRLA…VNLTGNALSM (151 aa)) are pectinesterase inhibitor 64. N98, N156, N212, N229, and N315 each carry an N-linked (GlcNAc...) asparagine glycan. Positions 288–595 (DVTVCKNGGK…YSVANFIQAD (308 aa)) are pectinesterase 64. 2 residues coordinate substrate: T367 and Q397. D420 acts as the Proton donor; for pectinesterase activity in catalysis. C434 and C454 are disulfide-bonded. The active-site Nucleophile; for pectinesterase activity is D441. N-linked (GlcNAc...) asparagine glycosylation is found at N492 and N496. Residues R518 and W520 each coordinate substrate.

This sequence in the N-terminal section; belongs to the PMEI family. In the C-terminal section; belongs to the pectinesterase family. As to expression, expressed in siliques.

It localises to the membrane. The catalysed reaction is [(1-&gt;4)-alpha-D-galacturonosyl methyl ester](n) + n H2O = [(1-&gt;4)-alpha-D-galacturonosyl](n) + n methanol + n H(+). It participates in glycan metabolism; pectin degradation; 2-dehydro-3-deoxy-D-gluconate from pectin: step 1/5. Functionally, acts in the modification of cell walls via demethylesterification of cell wall pectin. In Arabidopsis thaliana (Mouse-ear cress), this protein is Probable pectinesterase/pectinesterase inhibitor 64 (PME64).